Here is a 334-residue protein sequence, read N- to C-terminus: UDP-N-acetylglucosamine 4,6-dehydratase (inverting) (334 aa).

Residues 13 to 16 (TGSF), 37 to 42 (SRDELK), 61 to 62 (DV), alanine 81, lysine 85, and 123 to 124 (LS) contribute to the NADP(+) site. Lysine 85 is a substrate binding site. Lysine 127 is an active-site residue. Positions 135 and 139 each coordinate NADP(+). A substrate-binding site is contributed by asparagine 167. 168–172 (VVGSR) is an NADP(+) binding site. Substrate contacts are provided by valine 175, threonine 193, arginine 252, and glutamate 255.

Belongs to the polysaccharide synthase family. Homohexamer. NADP(+) serves as cofactor.

The enzyme catalyses UDP-N-acetyl-alpha-D-glucosamine = UDP-2-acetamido-2,6-dideoxy-beta-L-arabino-hex-4-ulose + H2O. Its function is as follows. Catalyzes the first step in the biosynthesis of pseudaminic acid, a sialic-acid-like sugar that is used to modify flagellin. Has both C6 dehydratase and C5 epimerase activities that result in the production of both UDP-2-acetamido-2,6-dideoxy-beta-L-arabino-4-hexulose and UDP-2-acetamido-2,6-dideoxy-alpha-D-xylo-4-hexulose. This Campylobacter jejuni subsp. jejuni serotype O:2 (strain ATCC 700819 / NCTC 11168) protein is UDP-N-acetylglucosamine 4,6-dehydratase (inverting) (pseB).